The primary structure comprises 350 residues: Chemokine C-C motif receptor-like 2 (350 aa).

Topologically, residues 1-43 (MANYTSAPEDDYDVFIEDDLSNDERELCSPYDPQALLAQLVPY) are extracellular. N3 is a glycosylation site (N-linked (GlcNAc...) asparagine). A helical transmembrane segment spans residues 44–64 (LFITVFLVGLLDNILVVLIMV). Residues 65–74 (KYKGLKQVEN) lie on the Cytoplasmic side of the membrane. The chain crosses the membrane as a helical span at residues 75-95 (IYLLNLAVCNLCFLCTLPFWV). At 96–110 (HMAWHEGDPGEPLCK) the chain is on the extracellular side. C109 and C187 form a disulfide bridge. Residues 111-131 (ILLVLYSVGLFSEAFFNVLLT) form a helical membrane-spanning segment. Topologically, residues 132 to 149 (VQRYQKFFQMRGFFSATR) are cytoplasmic. Residues 150–170 (MVAGSIFPSALVWVIAVLVML) traverse the membrane as a helical segment. Residues 171 to 204 (PELAFYKPQMENQKYKCFFGRPLFLPADETFWKH) lie on the Extracellular side of the membrane. A helical transmembrane segment spans residues 205-225 (FLTLKMNILGFLLPLFVFVFC). Residues 226–244 (YVRMRRTLKFGERGYDLFK) are Cytoplasmic-facing. A helical transmembrane segment spans residues 245–265 (LVFTIMVVFLLMWGPYNIALF). At 266-288 (LSAFNEHFSLHGCESSHNLDRST) the chain is on the extracellular side. Residues 289–309 (LITKIIATTHCCVNPLLYVFF) traverse the membrane as a helical segment. At 310-350 (DEAFRKHLYHFCHLCNDTAPQPTEEPAQGTSREEPCLSTKM) the chain is on the cytoplasmic side. The interval 329-350 (PQPTEEPAQGTSREEPCLSTKM) is disordered.

The protein belongs to the G-protein coupled receptor 1 family.

Its subcellular location is the cell membrane. Functionally, receptor for CCL19 and chemerin/RARRES2. Does not appear to be a signaling receptor, but may have a role in modulating chemokine-triggered immune responses by capturing and internalizing CCL19 or by presenting RARRES2 ligand to CMKLR1, a functional signaling receptor. Plays a critical role for the development of Th2 responses. The sequence is that of Chemokine C-C motif receptor-like 2 (CCRL2) from Sus scrofa (Pig).